Reading from the N-terminus, the 246-residue chain is Uridylate kinase (246 aa).

Position 16–19 (16–19 (KFSG)) interacts with ATP. Gly-58 serves as a coordination point for UMP. 2 residues coordinate ATP: Gly-59 and Arg-63. UMP is bound by residues Asp-78 and 139 to 146 (TGNPFFTT). Thr-166, Tyr-172, and Asp-175 together coordinate ATP.

The protein belongs to the UMP kinase family. Homohexamer.

It is found in the cytoplasm. It carries out the reaction UMP + ATP = UDP + ADP. It participates in pyrimidine metabolism; CTP biosynthesis via de novo pathway; UDP from UMP (UMPK route): step 1/1. With respect to regulation, inhibited by UTP. Catalyzes the reversible phosphorylation of UMP to UDP. In Legionella pneumophila (strain Corby), this protein is Uridylate kinase.